The chain runs to 128 residues: S-protein homolog 5 (128 aa).

The N-terminal stretch at 1 to 20 is a signal peptide; that stretch reads MEKVSIVCFFFFLLFGSGYG.

Belongs to the plant self-incompatibility (S1) protein family.

It localises to the secreted. In Arabidopsis thaliana (Mouse-ear cress), this protein is S-protein homolog 5.